The sequence spans 158 residues: 2-C-methyl-D-erythritol 2,4-cyclodiphosphate synthase (158 aa).

A divalent metal cation contacts are provided by Asp-9 and His-11. 4-CDP-2-C-methyl-D-erythritol 2-phosphate contacts are provided by residues 9-11 (DVH) and 35-36 (HS). His-43 contributes to the a divalent metal cation binding site. 4-CDP-2-C-methyl-D-erythritol 2-phosphate is bound by residues 57–59 (DIG), 62–66 (FPDTD), 133–136 (TTTE), Phe-140, and Arg-143.

The protein belongs to the IspF family. As to quaternary structure, homotrimer. A divalent metal cation is required as a cofactor.

It carries out the reaction 4-CDP-2-C-methyl-D-erythritol 2-phosphate = 2-C-methyl-D-erythritol 2,4-cyclic diphosphate + CMP. It participates in isoprenoid biosynthesis; isopentenyl diphosphate biosynthesis via DXP pathway; isopentenyl diphosphate from 1-deoxy-D-xylulose 5-phosphate: step 4/6. Its function is as follows. Involved in the biosynthesis of isopentenyl diphosphate (IPP) and dimethylallyl diphosphate (DMAPP), two major building blocks of isoprenoid compounds. Catalyzes the conversion of 4-diphosphocytidyl-2-C-methyl-D-erythritol 2-phosphate (CDP-ME2P) to 2-C-methyl-D-erythritol 2,4-cyclodiphosphate (ME-CPP) with a corresponding release of cytidine 5-monophosphate (CMP). This Haemophilus influenzae (strain 86-028NP) protein is 2-C-methyl-D-erythritol 2,4-cyclodiphosphate synthase.